Reading from the N-terminus, the 152-residue chain is Melatonin receptor type 1B (152 aa).

At 1–12 the chain is on the cytoplasmic side; that stretch reads HSFVYEKLFSLW. A helical membrane pass occupies residues 13 to 33; sequence NTILYVCLIWTLTVVATVPNF. At 34–57 the chain is on the extracellular side; sequence FVGSLEYDPRIYSCTFVQTVSSSY. A helical transmembrane segment spans residues 58–78; sequence TITVVVIHFILPITVVTFCYL. The Cytoplasmic segment spans residues 79-110; the sequence is RIWILVIQVRRKVKSEFKPRMKQSDFRNFLTM. The helical transmembrane segment at 111-131 threads the bilayer; it reads FVVFVIFAFCWAPLNFIGLAV. Over 132–144 the chain is Extracellular; sequence SINPTEVAPKIPE. The helical transmembrane segment at 145-152 threads the bilayer; the sequence is WLFVVSYF.

It belongs to the G-protein coupled receptor 1 family.

Its subcellular location is the cell membrane. In terms of biological role, high affinity receptor for melatonin. The activity of this receptor is mediated by pertussis toxin sensitive G proteins that inhibits adenylate cyclase activity. This Xenopus laevis (African clawed frog) protein is Melatonin receptor type 1B (mtnr1b).